Here is a 681-residue protein sequence, read N- to C-terminus: Envelope glycoprotein (681 aa).

An N-terminal signal peptide occupies residues 1–18 (MKTTCLFISLILIQGIKT). The Extracellular portion of the chain corresponds to 19 to 648 (LPILEIASNN…GLGGKWWTSD (630 aa)). Positions 38-188 (SGTLQKTEDV…FSRQGQGYRH (151 aa)) are receptor-binding. Residues Asn94, Asn171, Asn190, Asn202, Asn207, Asn219, Asn223, and Asn255 are each glycosylated (N-linked (GlcNAc...) asparagine; by host). A disordered region spans residues 223–351 (NQTCAPSKIP…STNNTSKNNF (129 aa)). Low complexity predominate over residues 244-259 (PTSTPTDATTLNTTDP). A mucin-like region region spans residues 277–455 (EPYTTSDAVT…PFLDGLINAP (179 aa)). Polar residues-rich tracts occupy residues 278–290 (PYTTSDAVTKQGL) and 308–341 (EGNNTDHSQGTVTEPNKTNTTAQPSMPPHNTTAI). N-linked (GlcNAc...) asparagine; by host glycans are attached at residues Asn310, Asn323, Asn326, Asn337, Asn344, Asn345, Asn350, Asn360, Asn389, Asn397, Asn408, and Asn487. A compositionally biased stretch (low complexity) spans 342–351 (STNNTSKNNF). Residues 366–414 (TQSTATENEQTSAPSKTTLPPTGNLTTAKSTNNTKGPTTTAPNMTNGHL) show a composition bias toward polar residues. Residues 366 to 425 (TQSTATENEQTSAPSKTTLPPTGNLTTAKSTNNTKGPTTTAPNMTNGHLTSPSPTPNPTT) form a disordered region. The tract at residues 529–549 (GLSWIPFFGPGIEGLYTAGLI) is fusion peptide. N-linked (GlcNAc...) asparagine; by host glycosylation is found at Asn564 and Asn619. The helical transmembrane segment at 649–669 (WGVLTNLGILLLLSIAVLIAL) threads the bilayer. Topologically, residues 670–681 (SCICRIFTKYIG) are cytoplasmic. S-palmitoyl cysteine; by host attachment occurs at residues Cys671 and Cys673.

The protein belongs to the filoviruses glycoprotein family. As to quaternary structure, homotrimer; each monomer consists of a GP1 and a GP2 subunit linked by disulfide bonds. The resulting peplomers (GP1,2) protrude from the virus surface as spikes. GP1,2 interacts with human CD209 and CLEC4M (collectively referred to as DC-SIGN(R)). Asialoglycoprotein receptor (ASGP-R) may be a liver-specific receptor for GP1,2. Members of the Tyro3 receptor tyrosine kinase family may be cell entry factors interacting with GP1,2. In terms of processing, N-glycosylated. Post-translationally, O-glycosylated in the mucin-like region. Specific enzymatic cleavages in vivo yield mature proteins. The precursor is processed into GP1 and GP2 by host cell furin in the trans Golgi, and maybe by other host proteases, to yield the mature GP1 and GP2 proteins. The cleavage site corresponds to the furin optimal cleavage sequence [KR]-X-[KR]-R. In terms of processing, GP1 is phosphorylated on serine residues between residues 260 and 273.

The protein localises to the virion membrane. It localises to the host cell membrane. In terms of biological role, GP1 is responsible for binding to the receptor(s) on target cells. Interacts with CD209/DC-SIGN and CLEC4M/DC-SIGNR which act as cofactors for virus entry into the host cell. Binding to CD209 and CLEC4M, which are respectively found on dendritic cells (DCs), and on endothelial cells of liver sinusoids and lymph node sinuses, facilitate infection of macrophages and endothelial cells. These interactions not only facilitate virus cell entry, but also allow capture of viral particles by DCs and subsequent transmission to susceptible cells without DCs infection (trans infection). GP2 acts as a class I viral fusion protein. Under the current model, the protein has at least 3 conformational states: pre-fusion native state, pre-hairpin intermediate state, and post-fusion hairpin state. During viral and target cell membrane fusion, the coiled coil regions (heptad repeats) assume a trimer-of-hairpins structure, positioning the fusion peptide in close proximity to the C-terminal region of the ectodomain. The formation of this structure appears to drive apposition and subsequent fusion of viral and target cell membranes. Responsible for penetration of the virus into the cell cytoplasm by mediating the fusion of the membrane of the endocytosed virus particle with the endosomal membrane. Low pH in endosomes induces an irreversible conformational change in GP2, releasing the fusion hydrophobic peptide. This is Envelope glycoprotein (GP) from Lake Victoria marburgvirus (strain Popp-67) (MARV).